The following is a 466-amino-acid chain: Prophage integrase IntF (466 aa).

Residues 134–239 (KTKVTFSVAW…LLRAFIKWSN (106 aa)) enclose the Core-binding (CB) domain. The region spanning 268–445 (KADDCLQKEQ…PLDLLRKWHE (178 aa)) is the Tyr recombinase domain. Residues arginine 306, lysine 328, histidine 396, arginine 399, and histidine 422 contribute to the active site. Tyrosine 432 serves as the catalytic O-(3'-phospho-DNA)-tyrosine intermediate.

The protein belongs to the 'phage' integrase family.

Integrase is necessary for integration of the phage into the host genome by site-specific recombination. In conjunction with excisionase, integrase is also necessary for excision of the prophage from the host genome. The chain is Prophage integrase IntF (intF) from Escherichia coli (strain K12).